A 531-amino-acid polypeptide reads, in one-letter code: tRNA-2-methylthio-N(6)-dimethylallyladenosine synthase (531 aa).

Residues 1–26 (MNEKQRLEQTGQIKTESHPADRKSAL) are disordered. Positions 15 to 26 (TESHPADRKSAL) are enriched in basic and acidic residues. Residues 80 to 198 (RKFYIRTYGC…LPYILHEAYM (119 aa)) form the MTTase N-terminal domain. [4Fe-4S] cluster-binding residues include cysteine 89, cysteine 125, cysteine 159, cysteine 235, cysteine 239, and cysteine 242. The Radical SAM core domain maps to 221–451 (RKGKIKAWVN…NDLVQEIAAK (231 aa)). The TRAM domain maps to 454–517 (KQYEGQVVEV…TWTLTGELVN (64 aa)).

The protein belongs to the methylthiotransferase family. MiaB subfamily. In terms of assembly, monomer. The cofactor is [4Fe-4S] cluster.

The protein resides in the cytoplasm. It catalyses the reaction N(6)-dimethylallyladenosine(37) in tRNA + (sulfur carrier)-SH + AH2 + 2 S-adenosyl-L-methionine = 2-methylsulfanyl-N(6)-dimethylallyladenosine(37) in tRNA + (sulfur carrier)-H + 5'-deoxyadenosine + L-methionine + A + S-adenosyl-L-homocysteine + 2 H(+). In terms of biological role, catalyzes the methylthiolation of N6-(dimethylallyl)adenosine (i(6)A), leading to the formation of 2-methylthio-N6-(dimethylallyl)adenosine (ms(2)i(6)A) at position 37 in tRNAs that read codons beginning with uridine. The sequence is that of tRNA-2-methylthio-N(6)-dimethylallyladenosine synthase from Geobacillus kaustophilus (strain HTA426).